The primary structure comprises 787 residues: Endonuclease MutS2 (787 aa).

334–341 (GPNTGGKT) provides a ligand contact to ATP. The interval 685-709 (KAQDPAKSAKQPRASVKRSGSSGMS) is disordered. In terms of domain architecture, Smr spans 712–787 (LDLRGHRYEE…GDGSTVVHFK (76 aa)).

The protein belongs to the DNA mismatch repair MutS family. MutS2 subfamily. In terms of assembly, homodimer. Binds to stalled ribosomes, contacting rRNA.

Functionally, endonuclease that is involved in the suppression of homologous recombination and thus may have a key role in the control of bacterial genetic diversity. Its function is as follows. Acts as a ribosome collision sensor, splitting the ribosome into its 2 subunits. Detects stalled/collided 70S ribosomes which it binds and splits by an ATP-hydrolysis driven conformational change. Acts upstream of the ribosome quality control system (RQC), a ribosome-associated complex that mediates the extraction of incompletely synthesized nascent chains from stalled ribosomes and their subsequent degradation. Probably generates substrates for RQC. In Levilactobacillus brevis (strain ATCC 367 / BCRC 12310 / CIP 105137 / JCM 1170 / LMG 11437 / NCIMB 947 / NCTC 947) (Lactobacillus brevis), this protein is Endonuclease MutS2.